The chain runs to 186 residues: Peptidyl-tRNA hydrolase (186 aa).

Y14 is a binding site for tRNA. H19 (proton acceptor) is an active-site residue. Residues Y64, N66, and N112 each contribute to the tRNA site.

It belongs to the PTH family. As to quaternary structure, monomer.

It is found in the cytoplasm. The enzyme catalyses an N-acyl-L-alpha-aminoacyl-tRNA + H2O = an N-acyl-L-amino acid + a tRNA + H(+). Its function is as follows. Hydrolyzes ribosome-free peptidyl-tRNAs (with 1 or more amino acids incorporated), which drop off the ribosome during protein synthesis, or as a result of ribosome stalling. Functionally, catalyzes the release of premature peptidyl moieties from peptidyl-tRNA molecules trapped in stalled 50S ribosomal subunits, and thus maintains levels of free tRNAs and 50S ribosomes. This is Peptidyl-tRNA hydrolase from Geobacillus kaustophilus (strain HTA426).